Consider the following 415-residue polypeptide: Serine hydroxymethyltransferase (415 aa).

Residues Leu119 and 123 to 125 (GHL) contribute to the (6S)-5,6,7,8-tetrahydrofolate site. N6-(pyridoxal phosphate)lysine is present on Lys228. 353–355 (SAF) provides a ligand contact to (6S)-5,6,7,8-tetrahydrofolate.

Belongs to the SHMT family. Homodimer. Requires pyridoxal 5'-phosphate as cofactor.

It is found in the cytoplasm. It carries out the reaction (6R)-5,10-methylene-5,6,7,8-tetrahydrofolate + glycine + H2O = (6S)-5,6,7,8-tetrahydrofolate + L-serine. It functions in the pathway one-carbon metabolism; tetrahydrofolate interconversion. Its pathway is amino-acid biosynthesis; glycine biosynthesis; glycine from L-serine: step 1/1. Functionally, catalyzes the reversible interconversion of serine and glycine with tetrahydrofolate (THF) serving as the one-carbon carrier. Also exhibits THF-independent aldolase activity toward beta-hydroxyamino acids, producing glycine and aldehydes, via a retro-aldol mechanism. This is Serine hydroxymethyltransferase from Halobacterium salinarum (strain ATCC 29341 / DSM 671 / R1).